A 409-amino-acid polypeptide reads, in one-letter code: tRNA-specific 2-thiouridylase MnmA (409 aa).

ATP is bound by residues 40-47 (GLSGGVDS) and Leu-66. Cys-127 functions as the Nucleophile in the catalytic mechanism. Cysteines 127 and 237 form a disulfide. Gly-152 contacts ATP. Residues 187 to 189 (KDQ) are interaction with tRNA. Catalysis depends on Cys-237, which acts as the Cysteine persulfide intermediate. The tract at residues 342-343 (RY) is interaction with tRNA.

It belongs to the MnmA/TRMU family.

The protein localises to the cytoplasm. The enzyme catalyses S-sulfanyl-L-cysteinyl-[protein] + uridine(34) in tRNA + AH2 + ATP = 2-thiouridine(34) in tRNA + L-cysteinyl-[protein] + A + AMP + diphosphate + H(+). Functionally, catalyzes the 2-thiolation of uridine at the wobble position (U34) of tRNA, leading to the formation of s(2)U34. The chain is tRNA-specific 2-thiouridylase MnmA from Prochlorococcus marinus (strain MIT 9313).